The following is a 441-amino-acid chain: Ribulose bisphosphate carboxylase large chain (441 aa).

2 residues coordinate substrate: Asn-89 and Thr-139. Catalysis depends on Lys-141, which acts as the Proton acceptor. Lys-143 contributes to the substrate binding site. Mg(2+)-binding residues include Lys-167, Asp-169, and Glu-170. At Lys-167 the chain carries N6-carboxylysine. His-260 serves as the catalytic Proton acceptor. Substrate contacts are provided by Arg-261, His-293, and Ser-345.

It belongs to the RuBisCO large chain family. Type I subfamily. As to quaternary structure, heterohexadecamer of 8 large chains and 8 small chains; disulfide-linked. The disulfide link is formed within the large subunit homodimers. Mg(2+) is required as a cofactor. The disulfide bond which can form in the large chain dimeric partners within the hexadecamer appears to be associated with oxidative stress and protein turnover.

The protein localises to the plastid. It is found in the chloroplast. It catalyses the reaction 2 (2R)-3-phosphoglycerate + 2 H(+) = D-ribulose 1,5-bisphosphate + CO2 + H2O. The enzyme catalyses D-ribulose 1,5-bisphosphate + O2 = 2-phosphoglycolate + (2R)-3-phosphoglycerate + 2 H(+). RuBisCO catalyzes two reactions: the carboxylation of D-ribulose 1,5-bisphosphate, the primary event in carbon dioxide fixation, as well as the oxidative fragmentation of the pentose substrate in the photorespiration process. Both reactions occur simultaneously and in competition at the same active site. The polypeptide is Ribulose bisphosphate carboxylase large chain (Symphoricarpos albus (Common snowberry)).